A 464-amino-acid polypeptide reads, in one-letter code: ATP synthase subunit beta 2 (464 aa).

147-154 lines the ATP pocket; that stretch reads GGAGVGKT.

Belongs to the ATPase alpha/beta chains family. In terms of assembly, F-type ATPases have 2 components, CF(1) - the catalytic core - and CF(0) - the membrane proton channel. CF(1) has five subunits: alpha(3), beta(3), gamma(1), delta(1), epsilon(1). CF(0) has four main subunits: a(1), b(1), b'(1) and c(9-12).

The protein localises to the cell inner membrane. It catalyses the reaction ATP + H2O + 4 H(+)(in) = ADP + phosphate + 5 H(+)(out). Its function is as follows. Produces ATP from ADP in the presence of a proton gradient across the membrane. The catalytic sites are hosted primarily by the beta subunits. The chain is ATP synthase subunit beta 2 from Cereibacter sphaeroides (strain ATCC 17029 / ATH 2.4.9) (Rhodobacter sphaeroides).